The chain runs to 258 residues: 3-deoxy-manno-octulosonate cytidylyltransferase (258 aa).

Belongs to the KdsB family.

The protein resides in the cytoplasm. The catalysed reaction is 3-deoxy-alpha-D-manno-oct-2-ulosonate + CTP = CMP-3-deoxy-beta-D-manno-octulosonate + diphosphate. It functions in the pathway nucleotide-sugar biosynthesis; CMP-3-deoxy-D-manno-octulosonate biosynthesis; CMP-3-deoxy-D-manno-octulosonate from 3-deoxy-D-manno-octulosonate and CTP: step 1/1. Its pathway is bacterial outer membrane biogenesis; lipopolysaccharide biosynthesis. In terms of biological role, activates KDO (a required 8-carbon sugar) for incorporation into bacterial lipopolysaccharide in Gram-negative bacteria. In Nitrobacter hamburgensis (strain DSM 10229 / NCIMB 13809 / X14), this protein is 3-deoxy-manno-octulosonate cytidylyltransferase.